A 467-amino-acid chain; its full sequence is GTPase Der (467 aa).

EngA-type G domains are found at residues 25-188 and 199-372; these read PVVA…PEAP and RRVA…ASWE. GTP contacts are provided by residues 31-38, 78-82, 140-143, 205-212, 252-256, and 317-320; these read GRPNVGKS, DTGGW, NKAD, DTAGL, and NKWD. In terms of domain architecture, KH-like spans 373–455; sequence TRVPTAQLNA…PIEISVRARK (83 aa).

Belongs to the TRAFAC class TrmE-Era-EngA-EngB-Septin-like GTPase superfamily. EngA (Der) GTPase family. As to quaternary structure, associates with the 50S ribosomal subunit.

In terms of biological role, GTPase that plays an essential role in the late steps of ribosome biogenesis. In Salinispora tropica (strain ATCC BAA-916 / DSM 44818 / JCM 13857 / NBRC 105044 / CNB-440), this protein is GTPase Der.